A 954-amino-acid chain; its full sequence is Glycine dehydrogenase (decarboxylating) (954 aa).

The residue at position 706 (K706) is an N6-(pyridoxal phosphate)lysine.

Belongs to the GcvP family. As to quaternary structure, the glycine cleavage system is composed of four proteins: P, T, L and H. Pyridoxal 5'-phosphate is required as a cofactor.

The catalysed reaction is N(6)-[(R)-lipoyl]-L-lysyl-[glycine-cleavage complex H protein] + glycine + H(+) = N(6)-[(R)-S(8)-aminomethyldihydrolipoyl]-L-lysyl-[glycine-cleavage complex H protein] + CO2. The glycine cleavage system catalyzes the degradation of glycine. The P protein binds the alpha-amino group of glycine through its pyridoxal phosphate cofactor; CO(2) is released and the remaining methylamine moiety is then transferred to the lipoamide cofactor of the H protein. The sequence is that of Glycine dehydrogenase (decarboxylating) from Pseudomonas syringae pv. syringae (strain B728a).